The chain runs to 267 residues: Ribosomal RNA large subunit methyltransferase E (267 aa).

Residues Gly-52, Phe-54, Asp-72, Asp-90, and Asp-114 each coordinate S-adenosyl-L-methionine. The Proton acceptor role is filled by Lys-154. The span at 212-252 shows a compositional bias: low complexity; it reads EAPRAPAPPEQAAAPEEATAPATRAARQKPAPAKKPAAAKR. The interval 212–267 is disordered; sequence EAPRAPAPPEQAAAPEEATAPATRAARQKPAPAKKPAAAKRPAARKRAAKKPARRA. Basic residues predominate over residues 253 to 267; the sequence is PAARKRAAKKPARRA.

This sequence belongs to the class I-like SAM-binding methyltransferase superfamily. RNA methyltransferase RlmE family.

It is found in the cytoplasm. It catalyses the reaction uridine(2552) in 23S rRNA + S-adenosyl-L-methionine = 2'-O-methyluridine(2552) in 23S rRNA + S-adenosyl-L-homocysteine + H(+). Its function is as follows. Specifically methylates the uridine in position 2552 of 23S rRNA at the 2'-O position of the ribose in the fully assembled 50S ribosomal subunit. This is Ribosomal RNA large subunit methyltransferase E from Anaeromyxobacter dehalogenans (strain 2CP-C).